The following is a 195-amino-acid chain: Imidazoleglycerol-phosphate dehydratase (195 aa).

This sequence belongs to the imidazoleglycerol-phosphate dehydratase family.

The protein resides in the cytoplasm. It carries out the reaction D-erythro-1-(imidazol-4-yl)glycerol 3-phosphate = 3-(imidazol-4-yl)-2-oxopropyl phosphate + H2O. The protein operates within amino-acid biosynthesis; L-histidine biosynthesis; L-histidine from 5-phospho-alpha-D-ribose 1-diphosphate: step 6/9. This Campylobacter concisus (strain 13826) protein is Imidazoleglycerol-phosphate dehydratase.